A 195-amino-acid chain; its full sequence is Probable chemoreceptor glutamine deamidase CheD 2 (195 aa).

The protein belongs to the CheD family.

The catalysed reaction is L-glutaminyl-[protein] + H2O = L-glutamyl-[protein] + NH4(+). Its function is as follows. Probably deamidates glutamine residues to glutamate on methyl-accepting chemotaxis receptors (MCPs), playing an important role in chemotaxis. The polypeptide is Probable chemoreceptor glutamine deamidase CheD 2 (Burkholderia thailandensis (strain ATCC 700388 / DSM 13276 / CCUG 48851 / CIP 106301 / E264)).